The sequence spans 57 residues: Somatostatin-2 (57 aa).

Positions 1–26 are disordered; sequence GRSHMVLNSALEGARGGPGGEEIPER.

Belongs to the somatostatin family.

It localises to the secreted. Its function is as follows. Somatostatin inhibits the release of somatotropin. In Piaractus mesopotamicus (Small-scaled pacu), this protein is Somatostatin-2 (sst2).